A 502-amino-acid chain; its full sequence is Hexokinase-2 (502 aa).

A helical membrane pass occupies residues 4 to 24; that stretch reads VAVATTVVCSVAVCAAAALIV. One can recognise a Hexokinase domain in the interval 35-487; it reads ARVIEILKAF…SGVGAALLAA (453 aa). The hexokinase small subdomain stretch occupies residues 90-228; that stretch reads SGDETGFFYA…GLDMLVAALV (139 aa). The ADP site is built by glycine 104, threonine 105, and asparagine 106. Positions 194, 195, 229, and 230 each coordinate D-glucose. Positions 229–476 are hexokinase large subdomain; sequence NDTIGTLAGG…ESVEVILSND (248 aa). Threonine 253 contributes to the ADP binding site. Residues asparagine 256, glutamate 284, and glutamate 315 each coordinate D-glucose. Glycine 441 provides a ligand contact to ADP.

This sequence belongs to the hexokinase family. In terms of tissue distribution, highly expressed in siliques, at intermediate levels in roots and flowers, and at lower levels in stems, rosette and cauline leaves.

It is found in the mitochondrion outer membrane. The enzyme catalyses a D-hexose + ATP = a D-hexose 6-phosphate + ADP + H(+). It carries out the reaction D-fructose + ATP = D-fructose 6-phosphate + ADP + H(+). The catalysed reaction is D-glucose + ATP = D-glucose 6-phosphate + ADP + H(+). The protein operates within carbohydrate metabolism; hexose metabolism. It functions in the pathway carbohydrate degradation; glycolysis; D-glyceraldehyde 3-phosphate and glycerone phosphate from D-glucose: step 1/4. Functionally, fructose and glucose phosphorylating enzyme. May be involved in the phosphorylation of glucose during the export from mitochondrion to cytosol. Acts as a sugar sensor which may regulate sugar-dependent gene repression or activation. Mediates the effects of sugar on plant growth and development independently of its catalytic activity or the sugar metabolism. May regulate the execution of program cell death in plant cells. In Arabidopsis thaliana (Mouse-ear cress), this protein is Hexokinase-2 (HXK2).